The sequence spans 337 residues: Glutaredoxin-3 (337 aa).

A2 bears the N-acetylalanine mark. In terms of domain architecture, Thioredoxin spans A2–S119. S119 carries the phosphoserine modification. Glutaredoxin domains follow at residues H144–E238 and E239–N337. [2Fe-2S] cluster is bound by residues C161 and C263.

Homodimer; the homodimer is independent of 2Fe-2S clusters. Heterotrimer; forms a heterotrimeric complex composed by two BOLA2 molecules and one GLRX3 molecule; linked by [2Fe-2S] clusters. Interacts (via N-terminus) with PRKCQ/PKC-theta. Interacts (via C-terminus) with CSRP3. Interacts with CSRP2.

It is found in the cytoplasm. It localises to the cytosol. The protein resides in the cell cortex. Its subcellular location is the myofibril. The protein localises to the sarcomere. It is found in the z line. Functionally, together with BOLA2, acts as a cytosolic iron-sulfur (Fe-S) cluster assembly factor that facilitates [2Fe-2S] cluster insertion into a subset of cytosolic proteins. Acts as a critical negative regulator of cardiac hypertrophy and a positive inotropic regulator. Required for hemoglobin maturation. Does not possess any thyoredoxin activity since it lacks the conserved motif that is essential for catalytic activity. This Mus musculus (Mouse) protein is Glutaredoxin-3 (Glrx3).